Consider the following 263-residue polypeptide: Putative inactive caspase B (263 aa).

The propeptide at 1–8 (MMCEDASD) is removed in mature form by cps-1 or ced-3.

It belongs to the peptidase C14A family. In terms of assembly, interacts with ced-3 (via large subunit p17 or small subunit p13); the interaction inhibits ced-3 autoactivation. In terms of processing, cleavage by csp-1 isoform b or ced-3 removes the propeptide and generates subunit p31 in vitro. An additional cleavage at Asp-149 generates the 2 subunits p17 and p14 but this cleavage appears to be less efficient. In terms of tissue distribution, specifically expressed in the hermaphrodite germline.

It localises to the cytoplasm. Putative inactive caspase. In the germline, binds caspase ced-3 zymogen and prevents ced-3 autoactivation. Does not affect the caspase activity of mature ced-3 and ced-4-mediated mature ced-3 activation. Negatively regulates germline apoptosis by inhibiting autocleavage of caspase ced-3. Involved in fertility. Functionally, putative inactive caspase. Dispensable for the inhibition of germline apoptosis. The polypeptide is Putative inactive caspase B (Caenorhabditis elegans).